The sequence spans 304 residues: ADP-ribosyl cyclase/cyclic ADP-ribose hydrolase 1 (304 aa).

Residues 1 to 21 (MANYEFSQVSGDRPGCRLSRK) lie on the Cytoplasmic side of the membrane. A helical; Signal-anchor for type II membrane protein membrane pass occupies residues 22–44 (AQIGLGVGLLVLIALVVGIVVIL). Topologically, residues 45–304 (LRPRSLLVWT…PEHPSCRLNT (260 aa)) are extracellular. 3 disulfides stabilise this stretch: cysteine 70/cysteine 86, cysteine 103/cysteine 184, and cysteine 164/cysteine 177. An N-linked (GlcNAc...) asparagine glycan is attached at asparagine 104. Cysteine 123 is a catalytic residue. Residue asparagine 124 is glycosylated (N-linked (GlcNAc...) asparagine). Cysteine 205 is a catalytic residue. 2 N-linked (GlcNAc...) asparagine glycosylation sites follow: asparagine 213 and asparagine 223. 2 disulfides stabilise this stretch: cysteine 258/cysteine 279 and cysteine 291/cysteine 300.

Belongs to the ADP-ribosyl cyclase family. Homodimer.

The protein resides in the membrane. The enzyme catalyses NAD(+) = cyclic ADP-beta-D-ribose + nicotinamide + H(+). The catalysed reaction is nicotinate + NADP(+) = nicotinate-adenine dinucleotide phosphate + nicotinamide. It carries out the reaction NAD(+) + H2O = ADP-D-ribose + nicotinamide + H(+). In terms of biological role, synthesizes the second messengers cyclic ADP-ribose (cADPR) and nicotinate-adenine dinucleotide phosphate (NAADP), the former a second messenger for glucose-induced insulin secretion, the latter a Ca(2+) mobilizer. Also has cADPR hydrolase activity. The chain is ADP-ribosyl cyclase/cyclic ADP-ribose hydrolase 1 (Cd38) from Mus musculus (Mouse).